Here is a 457-residue protein sequence, read N- to C-terminus: tRNA-2-methylthio-N(6)-dimethylallyladenosine synthase (457 aa).

The 118-residue stretch at 3 to 120 (KKVYVKTFGC…LPQMIDARRE (118 aa)) folds into the MTTase N-terminal domain. [4Fe-4S] cluster contacts are provided by Cys12, Cys49, Cys83, Cys157, Cys161, and Cys164. The Radical SAM core domain maps to 143–377 (RVEGPSAFVS…QATIEENVAR (235 aa)). Residues 380 to 447 (QSMLGKVERI…PHSLRGELVL (68 aa)) form the TRAM domain.

The protein belongs to the methylthiotransferase family. MiaB subfamily. As to quaternary structure, monomer. It depends on [4Fe-4S] cluster as a cofactor.

The protein resides in the cytoplasm. It carries out the reaction N(6)-dimethylallyladenosine(37) in tRNA + (sulfur carrier)-SH + AH2 + 2 S-adenosyl-L-methionine = 2-methylsulfanyl-N(6)-dimethylallyladenosine(37) in tRNA + (sulfur carrier)-H + 5'-deoxyadenosine + L-methionine + A + S-adenosyl-L-homocysteine + 2 H(+). In terms of biological role, catalyzes the methylthiolation of N6-(dimethylallyl)adenosine (i(6)A), leading to the formation of 2-methylthio-N6-(dimethylallyl)adenosine (ms(2)i(6)A) at position 37 in tRNAs that read codons beginning with uridine. The sequence is that of tRNA-2-methylthio-N(6)-dimethylallyladenosine synthase from Burkholderia mallei (strain NCTC 10247).